A 180-amino-acid chain; its full sequence is MGDPKRQRKKYETPSHPWIKERLDRERVLKRKYALKNKKELWRHETQLKEFRRRARRLLAARGKQAEIERQQLLQRLHRLGLLPADAALDDVLSLTVEDVLERRLQTLVYKKGLARTIRQARQLIVHGHIEVNGQIIRSPGYLVLREEEDTITYAKNSPFAKESHPERMVIEQAKQGGEA.

The S4 RNA-binding domain maps to 103–165 (RRLQTLVYKK…KNSPFAKESH (63 aa)).

The protein belongs to the universal ribosomal protein uS4 family. As to quaternary structure, part of the 30S ribosomal subunit. Contacts protein S5. The interaction surface between S4 and S5 is involved in control of translational fidelity.

Functionally, one of the primary rRNA binding proteins, it binds directly to 16S rRNA where it nucleates assembly of the body of the 30S subunit. Its function is as follows. With S5 and S12 plays an important role in translational accuracy. In Thermococcus gammatolerans (strain DSM 15229 / JCM 11827 / EJ3), this protein is Small ribosomal subunit protein uS4.